A 786-amino-acid chain; its full sequence is Tyrosine-protein kinase Btk (786 aa).

A disordered region spans residues 1-23 (MMGTKHRNSHVNGSIKSSSSLRS). The span at 14–23 (SIKSSSSLRS) shows a compositional bias: low complexity. The PH domain maps to 41 to 184 (DVVKSGSMVK…WIRAIRQVCE (144 aa)). Residues 187–223 (NTPKSYRYHPGLWSGKKWSCCKGLSRTTFGCRAAAHW) form a Btk-type zinc finger. Zn(2+) contacts are provided by histidine 195, cysteine 206, cysteine 207, and cysteine 217. Positions 226-240 (ANNNPSNGSSPAQNS) are enriched in low complexity. The interval 226–301 (ANNNPSNGSS…TPTSLQPQSS (76 aa)) is disordered. Residues 241–260 (TRSISPNSSTTNSQFSLQHN) are compositionally biased toward polar residues. A compositionally biased stretch (gly residues) spans 264–290 (SLGGGVGGGLGGGGSLGLGGGGGGGGS). The segment covering 291 to 301 (CTPTSLQPQSS) has biased composition (polar residues). The SH3 domain occupies 342–402 (HFVKLVVALY…PSNYVKPKAL (61 aa)). Residues 410–503 (WYVGDMSRQR…GLACRLKSSP (94 aa)) enclose the SH2 domain. The 254-residue stretch at 526–779 (LMLMEELGSG…FRVLMDQLAL (254 aa)) folds into the Protein kinase domain. ATP contacts are provided by residues 532-540 (LGSGQFGVV) and lysine 554. Aspartate 647 acts as the Proton acceptor in catalysis. Tyrosine 677 carries the post-translational modification Phosphotyrosine; by autocatalysis.

This sequence belongs to the protein kinase superfamily. Tyr protein kinase family. TEC subfamily. The cofactor is Zn(2+). Ring canals in the egg chambers and imaginal disks of third-instar larvae.

It catalyses the reaction L-tyrosyl-[protein] + ATP = O-phospho-L-tyrosyl-[protein] + ADP + H(+). Required for proper ring canal development. Also required for the development of male genitalia and for adult survival. In Drosophila melanogaster (Fruit fly), this protein is Tyrosine-protein kinase Btk.